The sequence spans 97 residues: MSLLDAHIPQLIASEANFGAKAALMRSTIAQAEQAAMSSQAFHMGEASAAFQAAHARFVEVSAKVNALLDIAQLNIGDAASSYVAQDAAAASTYTGI.

This sequence belongs to the WXG100 family. CFP-10 subfamily. Forms a tight 1:1 complex with EsxH.

It localises to the secreted. The polypeptide is ESAT-6-like protein EsxG (Mycolicibacterium smegmatis (strain ATCC 700084 / mc(2)155) (Mycobacterium smegmatis)).